Here is a 286-residue protein sequence, read N- to C-terminus: Lipoyl synthase (286 aa).

[4Fe-4S] cluster is bound by residues Cys34, Cys39, Cys45, Cys60, Cys64, Cys67, and Ser271. The 215-residue stretch at 46-260 (WESGTATFMI…EESAYSIGFS (215 aa)) folds into the Radical SAM core domain.

This sequence belongs to the radical SAM superfamily. Lipoyl synthase family. The cofactor is [4Fe-4S] cluster.

Its subcellular location is the cytoplasm. The enzyme catalyses [[Fe-S] cluster scaffold protein carrying a second [4Fe-4S](2+) cluster] + N(6)-octanoyl-L-lysyl-[protein] + 2 oxidized [2Fe-2S]-[ferredoxin] + 2 S-adenosyl-L-methionine + 4 H(+) = [[Fe-S] cluster scaffold protein] + N(6)-[(R)-dihydrolipoyl]-L-lysyl-[protein] + 4 Fe(3+) + 2 hydrogen sulfide + 2 5'-deoxyadenosine + 2 L-methionine + 2 reduced [2Fe-2S]-[ferredoxin]. The protein operates within protein modification; protein lipoylation via endogenous pathway; protein N(6)-(lipoyl)lysine from octanoyl-[acyl-carrier-protein]: step 2/2. Catalyzes the radical-mediated insertion of two sulfur atoms into the C-6 and C-8 positions of the octanoyl moiety bound to the lipoyl domains of lipoate-dependent enzymes, thereby converting the octanoylated domains into lipoylated derivatives. The chain is Lipoyl synthase from Picrophilus torridus (strain ATCC 700027 / DSM 9790 / JCM 10055 / NBRC 100828 / KAW 2/3).